An 898-amino-acid chain; its full sequence is Interleukin enhancer-binding factor 3-B (898 aa).

The DZF domain maps to 5–379; it reads RIFLNDDRHV…ALKRPIEEDG (375 aa). Disordered stretches follow at residues 52-87, 374-403, 468-529, 627-651, and 711-799; these read QEKD…NPTR, PIEE…PPQA, LPTG…VMEL, PPPQ…RGGF, and GEGY…QGAA. A compositionally biased stretch (acidic residues) spans 61-71; that stretch reads ENPEPEETETT. Basic and acidic residues-rich tracts occupy residues 72 to 81 and 374 to 384; these read EEGKDSEAKT and PIEEDGEDKSP. Positions 372–390 match the Bipartite nuclear localization signal motif; sequence KRPIEEDGEDKSPSKKKKK. A DRBM 1 domain is found at 399–468; that stretch reads EPPQAMNALM…AVKVLQDMGL (70 aa). Over residues 474–483 the composition is skewed to acidic residues; sequence EKEESVDESE. A compositionally biased stretch (polar residues) spans 489 to 513; it reads QTPSQTADSEQADSSAGDQSESGKQ. The 67-residue stretch at 521 to 587 folds into the DRBM 2 domain; that stretch reads HGKNPVMELN…ALSALEKLFP (67 aa). Residues 637-651 are compositionally biased toward gly residues; the sequence is RGGMNRGRGRGRGGF. The segment covering 717–747 has biased composition (pro residues); that stretch reads PTPPKPFVKKPPPPQQQQQPPPQHASNPPKP. Positions 749 to 782 are enriched in low complexity; it reads YNQGYQGHQGGQQQQQPQQQQQQTYNQNQYSNYG.

A component of a ybx2/frgy2-containing mRNA-ribonucleoprotein (mRNP) complex. Also a component of the CCAAT box transcription factor (CBTF) complex. In terms of processing, phosphorylated. Phosphorylation affects nuclear translocation. Post-translationally, methylated by protein arginine N-methyltransferase 1 (prmt1b) in the RGG-rich domain. Methylation decreases DNA-binding and thereby decreases transcription of the gata2 gene, but does not regulate dsRNA binding or subcellular localization.

The protein localises to the nucleus. Its subcellular location is the cytoplasm. In terms of biological role, RNA-binding protein that plays an essential role in the biogenesis of circular RNAs (circRNAs) which are produced by back-splicing circularization of pre-mRNAs. Within the nucleus, promotes circRNAs processing by stabilizing the regulatory elements residing in the flanking introns of the circularized exons. Plays thereby a role in the back-splicing of a subset of circRNAs. As a consequence, participates in a wide range of transcriptional and post-transcriptional processes. Binds to poly-U elements and AU-rich elements (AREs) in the 3'-UTR of target mRNAs. Upon viral infection, ILF3 accumulates in the cytoplasm and participates in the innate antiviral response. Mechanistically, ILF3 becomes phosphorylated and activated by the double-stranded RNA-activated protein kinase/PKR which releases ILF3 from cellular mature circRNAs. In turn, unbound ILF3 molecules are able to interact with and thus inhibit viral mRNAs. Has a cytoplasmic role early in development as part of a ribonucleoprotein (mRNP) complex which may regulate mRNA transport and/or translation. Following nuclear localization at the mid-blastula transition, acts as a transcription factor and binds the 5'-CCAAT-3' promoter sequence to regulate transcription of the gata2 gene as a subunit of the CCAAT box transcription factor (CBTF). Its role as an mRNP component negatively regulates its activity as a transcription factor by precluding its nuclear localization. This is Interleukin enhancer-binding factor 3-B (ilf3-b) from Xenopus laevis (African clawed frog).